The primary structure comprises 212 residues: Methylthioribulose-1-phosphate dehydratase (212 aa).

Zn(2+) is bound by residues histidine 97 and histidine 99.

The protein belongs to the aldolase class II family. MtnB subfamily. As to quaternary structure, homotetramer. The cofactor is Zn(2+).

It catalyses the reaction 5-(methylsulfanyl)-D-ribulose 1-phosphate = 5-methylsulfanyl-2,3-dioxopentyl phosphate + H2O. It functions in the pathway amino-acid biosynthesis; L-methionine biosynthesis via salvage pathway; L-methionine from S-methyl-5-thio-alpha-D-ribose 1-phosphate: step 2/6. Its function is as follows. Catalyzes the dehydration of methylthioribulose-1-phosphate (MTRu-1-P) into 2,3-diketo-5-methylthiopentyl-1-phosphate (DK-MTP-1-P). The protein is Methylthioribulose-1-phosphate dehydratase of Bacillus cereus (strain AH187).